Here is a 225-residue protein sequence, read N- to C-terminus: Ribonuclease HII (225 aa).

In terms of domain architecture, RNase H type-2 spans 35–225; it reads GLVAGVDEVG…SFRPCQISPD (191 aa). Residues aspartate 41, glutamate 42, and aspartate 137 each coordinate a divalent metal cation.

This sequence belongs to the RNase HII family. Mn(2+) is required as a cofactor. Mg(2+) serves as cofactor.

The protein resides in the cytoplasm. The catalysed reaction is Endonucleolytic cleavage to 5'-phosphomonoester.. Functionally, endonuclease that specifically degrades the RNA of RNA-DNA hybrids. The polypeptide is Ribonuclease HII (Nostoc sp. (strain PCC 7120 / SAG 25.82 / UTEX 2576)).